The primary structure comprises 946 residues: ATP-dependent 6-phosphofructokinase subunit beta (946 aa).

Positions methionine 1 to threonine 559 are N-terminal catalytic PFK domain 1. ATP-binding positions include glycine 192, arginine 256–cysteine 257, and glycine 286–serine 289. Residue aspartate 287 coordinates Mg(2+). Residues serine 332–aspartate 334, arginine 369, methionine 376–arginine 378, glutamate 433, arginine 461, and histidine 467–arginine 470 contribute to the beta-D-fructose 6-phosphate site. Residue aspartate 334 is the Proton acceptor of the active site. Positions alanine 560–lysine 573 are interdomain linker. The interval lysine 574–proline 946 is C-terminal regulatory PFK domain 2. Beta-D-fructose 2,6-bisphosphate is bound by residues arginine 644, threonine 702–asparagine 706, glutamine 747–glycine 749, lysine 833, histidine 839–glutamine 842, and arginine 920.

This sequence belongs to the phosphofructokinase type A (PFKA) family. ATP-dependent PFK group I subfamily. Eukaryotic two domain clade 'E' sub-subfamily. As to quaternary structure, heterooctamer of 4 alpha and 4 beta chains. It depends on Mg(2+) as a cofactor.

It localises to the cytoplasm. The enzyme catalyses beta-D-fructose 6-phosphate + ATP = beta-D-fructose 1,6-bisphosphate + ADP + H(+). The protein operates within carbohydrate degradation; glycolysis; D-glyceraldehyde 3-phosphate and glycerone phosphate from D-glucose: step 3/4. With respect to regulation, allosterically activated by ADP, AMP, or fructose 2,6-bisphosphate, and allosterically inhibited by ATP or citrate. Functionally, catalyzes the phosphorylation of D-fructose 6-phosphate to fructose 1,6-bisphosphate by ATP, the first committing step of glycolysis. The protein is ATP-dependent 6-phosphofructokinase subunit beta (PFK2) of Candida albicans (Yeast).